The chain runs to 191 residues: Ribosomal RNA small subunit methyltransferase G (191 aa).

S-adenosyl-L-methionine is bound by residues Gly59, 111–112 (IE), and Arg124.

Belongs to the methyltransferase superfamily. RNA methyltransferase RsmG family.

It is found in the cytoplasm. In terms of biological role, specifically methylates the N7 position of a guanine in 16S rRNA. In Mycoplasma pneumoniae (strain ATCC 29342 / M129 / Subtype 1) (Mycoplasmoides pneumoniae), this protein is Ribosomal RNA small subunit methyltransferase G.